Reading from the N-terminus, the 152-residue chain is Transcriptional repressor NrdR (152 aa).

A zinc finger lies at 3-34 (CPYCNASETKVIDSRLAAEGAQVRRRRSCNSC). The ATP-cone domain occupies 49 to 139 (PRIIKSSGKI…VYRDFQDIDA (91 aa)).

The protein belongs to the NrdR family. The cofactor is Zn(2+).

Its function is as follows. Negatively regulates transcription of bacterial ribonucleotide reductase nrd genes and operons by binding to NrdR-boxes. The protein is Transcriptional repressor NrdR of Psychrobacter cryohalolentis (strain ATCC BAA-1226 / DSM 17306 / VKM B-2378 / K5).